Here is a 2603-residue protein sequence, read N- to C-terminus: MEKATVPVAAATAAEGEGSPPAVAAVAGPPAAAEVGGGVGGSSRARSASSPRGMVRVCDLLLKKKPPQQQHHKAKRNRTCRPPSSSESSSDSDNSGGGGGGGGGGGGGGGTSSNNSEEEEDDDDEEEEVSEVESFILDQDDLENPMLETASKLLLSGTADGADLRTVDPETQARLEALLEAAGIGKLSTADGKAFADPEVLRRLTSSVSCALDEAAAALTRMRAESTANAGQSDNRSLAEACSEGDVNAVRKLLIEGRSVNEHTEEGESLLCLACSAGYYELAQVLLAMHANVEDRGIKGDITPLMAAANGGHVKIVKLLLAHKADVNAQSSTGNTALTYACAGGYVDVVKVLLESGASIEDHNENGHTPLMEAGSAGHVEVARLLLENGAGINTHSNEFKESALTLACYKGHLEMVRFLLEAGADQEHKTDEMHTALMEACMDGHVEVARLLLDSGAQVNMPADSFESPLTLAACGGHVELAALLIERGASLEEVNDEGYTPLMEAAREGHEEMVALLLGQGANINAQTEETQETALTLACCGGFLEVADFLIKAGADIELGCSTPLMEAAQEGHLELVKYLLAAGANVHATTATGDTALTYACENGHTDVADVLLQAGADLEHESEGGRTPLMKAARAGHVCTVQFLISKGANVNRTTANNDHTVLSLACAGGHLAVVELLLAHGADPTHRLKDGSTMLIEAAKGGHTSVVCYLLDYPNNLLSAPPPDVTQLTPPSHDLNRAPRVPVQALPMVVPPQEPDKPPANVATTLPIRNKAASKQKSSSHLPANSQDVQGYITNQSPESIVEEAQGKLTELEQRIKEAIEKNAQLQSLELAHADQLTKEKIEELNKTREEQIQKKQKILEELQKVERELQLKTQQQLKKQYLEVKAQRIQLQQQQQQSCQHLGLLTPVGVGEQLSEGDYARLQQVDPVLLKDEPQQTAAQMGFAPIQPLAMPQALPLAAGPLPPGSIANLTELQGVIVGQPVLGQAQLAGLGQGILTETQQGLMVASPAQTLNDTLDDIMAAVSGRASAMSNTPTHSIAASISQPQTPTPSPIISPSAMLPIYPAIDIDAQTESNHDTALTLACAGGHEELVQTLLERGASIEHRDKKGFTPLILAATAGHVGVVEILLDNGADIEAQSERTKDTPLSLACSGGRQEVVELLLARGANKEHRNVSDYTPLSLAASGGYVNIIKILLNAGAEINSRTGSKLGISPLMLAAMNGHTAAVKLLLDMGSDINAQIETNRNTALTLACFQGRTEVVSLLLDRKANVEHRAKTGLTPLMEAASGGYAEVGRVLLDKGADVNAPPVPSSRDTALTIAADKGHYKFCELLIGRGAHIDVRNKKGNTPLWLAANGGHLDVVQLLVQAGADVDAADNRKITPLMAAFRKGHVKVVRYLVKEVNQFPSDSECMRYIATITDKEMLKKCHLCMESIVQAKDRQAAEANKNASILLEELDLEKLREESRRLALAAKREKRKEKRRKKKEEQRRKLEEIEAKNKENFELQAAQEKEKLKVEDEPEVLTEPPSATTTTTIGISATWTTLAGSHGKRNNTITTTSSKRKNRKNKITPENVQIIFDDPLPISYSQPEKVNGESKSSSTSESGDSDNMRISSCSDESSNSNSSRKSDNHSPAVVTTTVSSKKQPSVLVTFPKEERKSVSGKASIKLSETISEGTSNSLSTCTKSGPSPLSSPNGKLTVASPKRGQKREEGWKEVVRRSKKVSVPSTVISRVIGRGGCNINAIREFTGAHIDIDKQKDKTGDRIITIRGGTESTRQATQLINALIKDPDKEIDELIPKNRLKSSSANSKIGSSAPTTTAANTSLMGIKMTTVALSSTSQTATALTVPAISSASTHKTIKNPVNNVRPGFPVSLPLAYPPPQFAHALLAAQTFQQIRPPRLPMTHFGGTFPPAQSTWGPFPVRPLSPARATNSPKPHMVPRHSNQNSSGSQVNSAGSLTSSPTTTTSSSASTVPGTSTNGSPSSPSVRRQLFVTVVKTSNATTTTVTTTASNNNTAPTNATYPMPTAKEHYPVSSPSSPSPPAQPGGVSRNSPLDCGSASPNKVASSSEQEAGSPPVVETTNTRPPNSSSSSGSSSAHSNQQQPPGSVSQEPRPPLQQSQVPPPEVRMTVPPLATSSAPVAVPSTAPVTYPMPQTPMGCPQPTPKMETPAIRPPPHGTTAPHKNSASVQNSSVAVLSVNHIKRPHSVPSSVQLPSTLSTQSACQNSVHPANKPIAPNFSAPLPFGPFSTLFENSPTSAHAFWGGSVVSSQSTPESMLSGKSSYLPNSDPLHQSDTSKAPGFRPPLQRPAPSPSGIVNMDSPYGSVTPSSTHLGNFASNISGGQMYGPGAPLGGAPAAANFNRQHFSPLSLLTPCSSASNDSSAQSVSSGVRAPSPAPSSVPLGSEKPSNVSQDRKVPVPIGTERSARIRQTGTSAPSVIGSNLSTSVGHSGIWSFEGIGGNQDKVDWCNPGMGNPMIHRPMSDPGVFSQHQAMERDSTGIVTPSGTFHQHVPAGYMDFPKVGGMPFSVYGNAMIPPVAPIPDGAGGPIFNGPHAADPSWNSLIKMVSSSTENNGPQTVWTGPWAPHMNSVHMNQLG.

Met-1 bears the N-acetylmethionine mark. 2 stretches are compositionally biased toward low complexity: residues 1 to 34 (MEKATVPVAAATAAEGEGSPPAVAAVAGPPAAAE) and 42 to 53 (SSRARSASSPRG). A disordered region spans residues 1–143 (MEKATVPVAA…SFILDQDDLE (143 aa)). 2 positions are modified to phosphoserine: Ser-19 and Ser-50. The span at 63–79 (KKKPPQQQHHKAKRNRT) shows a compositional bias: basic residues. Positions 84-94 (SSSESSSDSDN) are enriched in low complexity. The segment covering 95–111 (SGGGGGGGGGGGGGGGT) has biased composition (gly residues). Over residues 116–131 (SEEEEDDDDEEEEVSE) the composition is skewed to acidic residues. The residue at position 156 (Ser-156) is a Phosphoserine. 15 ANK repeats span residues 233–262 (SDNRSLAEACSEGDVNAVRKLLIEGRSVNE), 266–295 (EGESLLCLACSAGYYELAQVLLAMHANVED), 300–329 (GDITPLMAAANGGHVKIVKLLLAHKADVNA), 333–362 (TGNTALTYACAGGYVDVVKVLLESGASIED), 366–395 (NGHTPLMEAGSAGHVEVARLLLENGAGINT), 400–429 (FKESALTLACYKGHLEMVRFLLEAGADQEH), 433–462 (EMHTALMEACMDGHVEVARLLLDSGAQVNM), 466–495 (SFESPLTLAACGGHVELAALLIERGASLEE), 499–528 (EGYTPLMEAAREGHEEMVALLLGQGANINA), 533–562 (TQETALTLACCGGFLEVADFLIKAGADIEL), 563–592 (GCSTPLMEAAQEGHLELVKYLLAAGANVHA), 596–625 (TGDTALTYACENGHTDVADVLLQAGADLEH), 629–658 (GGRTPLMKAARAGHVCTVQFLISKGANVNR), 663–692 (NDHTVLSLACAGGHLAVVELLLAHGADPTH), and 696–725 (DGSTMLIEAAKGGHTSVVCYLLDYPNNLLS). Lys-318 participates in a covalent cross-link: Glycyl lysine isopeptide (Lys-Gly) (interchain with G-Cter in SUMO2). A Phosphoserine modification is found at Ser-803. ANK repeat units lie at residues 1082 to 1111 (NHDTALTLACAGGHEELVQTLLERGASIEH), 1115 to 1144 (KGFTPLILAATAGHVGVVEILLDNGADIEA), 1149 to 1178 (TKDTPLSLACSGGRQEVVELLLARGANKEH), 1182 to 1211 (SDYTPLSLAASGGYVNIIKILLNAGAEINS), 1217 to 1246 (LGISPLMLAAMNGHTAAVKLLLDMGSDINA), 1251 to 1280 (NRNTALTLACFQGRTEVVSLLLDRKANVEH), 1284 to 1313 (TGLTPLMEAASGGYAEVGRVLLDKGADVNA), 1319 to 1348 (SRDTALTIAADKGHYKFCELLIGRGAHIDV), 1352 to 1381 (KGNTPLWLAANGGHLDVVQLLVQAGADVDA), and 1385 to 1414 (RKITPLMAAFRKGHVKVVRYLVKEVNQFPS). Residues 1442 to 1526 (VQAKDRQAAE…EKEKLKVEDE (85 aa)) are a coiled coil. A Phosphoserine modification is found at Ser-1457. 2 disordered regions span residues 1479-1500 (AKREKRKEKRRKKKEEQRRKLE) and 1517-1717 (EKEK…QKRE). Over residues 1481–1491 (REKRKEKRRKK) the composition is skewed to basic residues. Composition is skewed to low complexity over residues 1531–1550 (TEPPSATTTTTIGISATWTT), 1602–1611 (ESKSSSTSES), and 1620–1632 (SSCSDESSNSNSS). Ser-1635 and Ser-1639 each carry phosphoserine. Polar residues-rich tracts occupy residues 1642 to 1652 (VVTTTVSSKKQ) and 1675 to 1703 (LSETISEGTSNSLSTCTKSGPSPLSSPNG). Phosphoserine is present on residues Ser-1696, Ser-1700, and Ser-1709. Residues 1725–1789 (RRSKKVSVPS…ESTRQATQLI (65 aa)) form the KH domain. Arg-1874 carries the asymmetric dimethylarginine modification. Disordered regions lie at residues 1906–1995 (PRLP…PSVR), 2011–2192 (TTVT…HKNS), and 2273–2332 (VVSS…YGSV). Low complexity-rich tracts occupy residues 1950 to 1995 (SNQN…PSVR) and 2011 to 2028 (TTVTTTASNNNTAPTNAT). Phosphoserine occurs at positions 2042, 2044, 2045, 2047, 2059, and 2067. A compositionally biased stretch (polar residues) spans 2066-2078 (ASPNKVASSSEQE). The segment covering 2095 to 2106 (SSSSSGSSSAHS) has biased composition (low complexity). 2 stretches are compositionally biased toward polar residues: residues 2107–2127 (NQQQPPGSVSQEPRPPLQQSQ) and 2273–2303 (VVSSQSTPESMLSGKSSYLPNSDPLHQSDTS). Positions 2308–2318 (FRPPLQRPAPS) are enriched in pro residues. A phosphoserine mark is found at Ser-2373 and Ser-2401. Residues 2381–2423 (CSSASNDSSAQSVSSGVRAPSPAPSSVPLGSEKPSNVSQDRKV) are disordered. A compositionally biased stretch (low complexity) spans 2382-2411 (SSASNDSSAQSVSSGVRAPSPAPSSVPLGS).

Interacts (via N-terminus) with NOD2. Interacts with CDK2, MCM3, MCM5, MCM7, CDC6 and PCNA. Interacts with MAVS and IFIH1. Interacts (via the second ankyrin repeat cluster) with DDX58. In terms of assembly, (Microbial infection) Interacts with enterovirus 71/EV71 capsid protein VP1. Post-translationally, phosphorylated by CDK2. As to expression, ubiquitously expressed.

Its subcellular location is the cytoplasm. It is found in the nucleus. In terms of biological role, could play pivotal roles in cell cycle and DNA regulation. Involved in innate immune defense against viruse by positively regulating the viral dsRNA receptors DDX58 and IFIH1 signaling pathways. Involves in NOD2- and NOD1-mediated responses to bacteria suggesting a role in innate antibacterial immune pathways too. Target of enterovirus 71 which is the major etiological agent of HFMD (hand, foot and mouth disease). Could play a central role for the formation and/or maintenance of the blood vessels of the circulation system. The polypeptide is Ankyrin repeat domain-containing protein 17 (ANKRD17) (Homo sapiens (Human)).